The following is a 327-amino-acid chain: Zinc transport protein ZntB (327 aa).

Over 1-271 (MDVVEGKALQ…AMNRRTYTMS (271 aa)) the chain is Cytoplasmic. Residues 272 to 292 (LLAMVFLPTTFLTGLFGVNLG) form a helical membrane-spanning segment. The Periplasmic segment spans residues 293–300 (GIPGNTDA). Residues 301-321 (FGFTIFCMMLVVLVLSVAWWL) form a helical membrane-spanning segment. Residues 322–327 (KRSKWL) are Cytoplasmic-facing.

This sequence belongs to the CorA metal ion transporter (MIT) (TC 1.A.35) family.

The protein localises to the cell inner membrane. It catalyses the reaction Zn(2+)(out) + H(+)(out) = Zn(2+)(in) + H(+)(in). Functionally, zinc transporter. Acts as a Zn(2+):proton symporter, which likely mediates zinc ion uptake. This Yersinia pseudotuberculosis serotype O:1b (strain IP 31758) protein is Zinc transport protein ZntB.